The chain runs to 133 residues: Large-conductance mechanosensitive channel (133 aa).

A run of 2 helical transmembrane segments spans residues 10–30 (FAVK…GAFG) and 76–96 (GAFI…FSMV).

This sequence belongs to the MscL family. In terms of assembly, homopentamer.

Its subcellular location is the cell inner membrane. Its function is as follows. Channel that opens in response to stretch forces in the membrane lipid bilayer. May participate in the regulation of osmotic pressure changes within the cell. This Haemophilus ducreyi (strain 35000HP / ATCC 700724) protein is Large-conductance mechanosensitive channel.